The primary structure comprises 426 residues: Glucose-6-phosphate isomerase (426 aa).

E276 (proton donor) is an active-site residue. Active-site residues include H297 and K413.

The protein belongs to the GPI family.

Its subcellular location is the cytoplasm. It catalyses the reaction alpha-D-glucose 6-phosphate = beta-D-fructose 6-phosphate. It functions in the pathway carbohydrate biosynthesis; gluconeogenesis. The protein operates within carbohydrate degradation; glycolysis; D-glyceraldehyde 3-phosphate and glycerone phosphate from D-glucose: step 2/4. Functionally, catalyzes the reversible isomerization of glucose-6-phosphate to fructose-6-phosphate. In Mesoplasma florum (strain ATCC 33453 / NBRC 100688 / NCTC 11704 / L1) (Acholeplasma florum), this protein is Glucose-6-phosphate isomerase.